The sequence spans 444 residues: Argininosuccinate synthase (444 aa).

ATP-binding positions include 18 to 26 (AFSGGLDTS) and alanine 44. An L-citrulline-binding site is contributed by tyrosine 100. The ATP site is built by glycine 130 and threonine 132. Residues threonine 132, asparagine 136, and aspartate 137 each coordinate L-aspartate. Asparagine 136 serves as a coordination point for L-citrulline. Aspartate 137 is an ATP binding site. Residues arginine 140 and serine 193 each contribute to the L-citrulline site. An ATP-binding site is contributed by aspartate 195. The L-citrulline site is built by threonine 202, glutamate 204, and glutamate 281.

Belongs to the argininosuccinate synthase family. Type 2 subfamily. Homotetramer.

It is found in the cytoplasm. The enzyme catalyses L-citrulline + L-aspartate + ATP = 2-(N(omega)-L-arginino)succinate + AMP + diphosphate + H(+). It functions in the pathway amino-acid biosynthesis; L-arginine biosynthesis; L-arginine from L-ornithine and carbamoyl phosphate: step 2/3. In Histophilus somni (strain 129Pt) (Haemophilus somnus), this protein is Argininosuccinate synthase.